A 135-amino-acid chain; its full sequence is Endocuticle structural glycoprotein SgAbd-2 (135 aa).

Gln-1 carries the post-translational modification Pyrrolidone carboxylic acid. Thr-11 and Thr-100 each carry an O-linked (HexNAc...) threonine glycan. Residues 32–102 (DGSYAYSYQT…AEGAHLPTPP (71 aa)) form the Chitin-binding type R&amp;R domain.

Component of the abdominal endocuticle. The polypeptide is Endocuticle structural glycoprotein SgAbd-2 (Schistocerca gregaria (Desert locust)).